A 508-amino-acid chain; its full sequence is Ell-associated factor Eaf (508 aa).

Polar residues-rich tracts occupy residues 140–150 (GQGQLHSQGAN) and 161–190 (GHST…SRRN). Disordered stretches follow at residues 140 to 226 (GQGQ…WDAN) and 251 to 508 (HNSG…DDDE). Residue Ser-200 is modified to Phosphoserine. The segment covering 251 to 268 (HNSGHANTSGSSTGSATG) has biased composition (low complexity). Composition is skewed to polar residues over residues 272–281 (FGSTSSSSHM) and 296–313 (QQMQ…QQPS). The span at 314–341 (NYGRGYNGGHNHVQQQQQRNSPQQQRPP) shows a compositional bias: low complexity. Acidic residues predominate over residues 391–406 (DSSDSDSGSDSDDSTE). 3 stretches are compositionally biased toward low complexity: residues 412-444 (QGQQ…HLNQ), 461-477 (HQHQ…QKQQ), and 489-502 (NDLL…SSNS).

Belongs to the EAF family.

The protein localises to the nucleus. In terms of biological role, promotes transcriptional elongation by Su(Tpl)/ELL. Essential for development. The protein is Ell-associated factor Eaf of Drosophila erecta (Fruit fly).